The following is a 217-amino-acid chain: Magnetosome protein MamA (217 aa).

TPR repeat units lie at residues valine 12–isoleucine 44, glutamine 46–aspartate 79, valine 80–asparagine 113, isoleucine 114–asparagine 147, phenylalanine 148–glutamate 181, and glycine 182–serine 215. The N-terminal domain stretch occupies residues asparagine 41 to aspartate 112. Positions asparagine 113–valine 217 are C-terminal domain.

The protein belongs to the magnetosome MamA family. As to quaternary structure, forms round, 20 nm diameter complexes with a central cavity. Probably binds MamC. Interacts with full-length Mms6.

Its subcellular location is the magnetosome membrane. Probably forms a large homooligomer on which other magnetosome subunits assemble. Required for formation of functional magnetosomes from pre-existing vesicles. The protein is Magnetosome protein MamA of Magnetospirillum gryphiswaldense (strain DSM 6361 / JCM 21280 / NBRC 15271 / MSR-1).